The sequence spans 435 residues: KMCGVTQNWESYESTKKASQLNLTPEQQRFPQRYIKLGIFVDHGMYTKYSGNSERITKRVHQMINNINMMCRALNIVTTLSLLEIWSEKDLITVQASAPTTLTLFGAWRETVLLNRTSHDHAQLLTATIFNGNVIGRAPVGGMCDPKRSVAIVRDHNAIVFVVAVTMTHEMGHNLGNHHDEDKCNCNTCIMSKVLSRQPSKYFSECSKDYYQTFLTNHNFQCILNAPLRTDTVSTPVSGNELLEAGEDCDCGSPANPCCDAATCKLRPGAQCGEGLCCDQCRFTSAGTECRAARSECDIAESCAGQSADCPTDDFHRNGQPCLNNHGYCYNGNCPIMFYQCIALFGSNATVGQDGCFDANDIGHKYFHCRKDNEKYIPCAPQDVKCGRLFCTYIYDIDLCRYDDSANGMVAQGTKCADGKVCNSNRQCADVNTAY.

Residues 1-26 (KMCGVTQNWESYESTKKASQLNLTPE) constitute a propeptide that is removed on maturation. A Pyrrolidone carboxylic acid modification is found at glutamine 27. The Peptidase M12B domain maps to 33–227 (RYIKLGIFVD…HNFQCILNAP (195 aa)). Asparagine 115 carries N-linked (GlcNAc...) asparagine glycosylation. Disulfide bonds link cysteine 144–cysteine 222, cysteine 184–cysteine 206, and cysteine 186–cysteine 189. Histidine 169 is a Zn(2+) binding site. Residue glutamate 170 is part of the active site. Residues histidine 173 and histidine 179 each coordinate Zn(2+). A propeptide spanning residues 228-243 (LRTDTVSTPVSGNELL) is cleaved from the precursor. The Disintegrin domain occupies 235–318 (TPVSGNELLE…DCPTDDFHRN (84 aa)). Ca(2+) contacts are provided by valine 237, asparagine 240, leucine 242, glutamate 244, glutamate 247, and aspartate 250. Cystine bridges form between cysteine 249–cysteine 264, cysteine 251–cysteine 259, cysteine 258–cysteine 281, cysteine 272–cysteine 278, cysteine 277–cysteine 303, and cysteine 290–cysteine 310. The short motif at 296–298 (ECD) is the D/ECD-tripeptide element.

Belongs to the venom metalloproteinase (M12B) family. P-III subfamily. P-IIIb sub-subfamily. As to quaternary structure, monomer. Zn(2+) serves as cofactor. Post-translationally, the N-terminus of the metalloproteinase is blocked. As to expression, expressed by the venom gland.

The protein resides in the secreted. Inhibited by EDTA. Its function is as follows. Cleaves the alpha chain of fibrinogen (FGA) preferentially and cleaves the beta chain (FGB) either on longer incubation or at high concentrations. Induces apoptosis of endothelial cells (prior to cell detachment). Functionally, disintegrin: inhibits platelet aggregation induced by ADP, thrombin, platelet-activating factor and collagen. Acts by inhibiting fibrinogen interaction with platelet receptors GPIIb/GPIIIa (ITGA2B/ITGB3). The polypeptide is Zinc metalloproteinase/disintegrin (Craspedocephalus gramineus (Bamboo pit viper)).